Reading from the N-terminus, the 457-residue chain is Siroheme synthase (457 aa).

The tract at residues 1–204 (MDHLPIFCQL…NDQKAITETT (204 aa)) is precorrin-2 dehydrogenase /sirohydrochlorin ferrochelatase. Residues 22–23 (DV) and 43–44 (LA) each bind NAD(+). A Phosphoserine modification is found at serine 128. Positions 216-457 (GEVVLVGAGP…RDKLNWFSNH (242 aa)) are uroporphyrinogen-III C-methyltransferase. Proline 225 serves as a coordination point for S-adenosyl-L-methionine. Aspartate 248 (proton acceptor) is an active-site residue. Lysine 270 acts as the Proton donor in catalysis. S-adenosyl-L-methionine-binding positions include 301 to 303 (GGD), isoleucine 306, 331 to 332 (TA), methionine 382, and glycine 411.

In the N-terminal section; belongs to the precorrin-2 dehydrogenase / sirohydrochlorin ferrochelatase family. This sequence in the C-terminal section; belongs to the precorrin methyltransferase family.

The enzyme catalyses uroporphyrinogen III + 2 S-adenosyl-L-methionine = precorrin-2 + 2 S-adenosyl-L-homocysteine + H(+). It carries out the reaction precorrin-2 + NAD(+) = sirohydrochlorin + NADH + 2 H(+). It catalyses the reaction siroheme + 2 H(+) = sirohydrochlorin + Fe(2+). It functions in the pathway cofactor biosynthesis; adenosylcobalamin biosynthesis; precorrin-2 from uroporphyrinogen III: step 1/1. The protein operates within cofactor biosynthesis; adenosylcobalamin biosynthesis; sirohydrochlorin from precorrin-2: step 1/1. Its pathway is porphyrin-containing compound metabolism; siroheme biosynthesis; precorrin-2 from uroporphyrinogen III: step 1/1. It participates in porphyrin-containing compound metabolism; siroheme biosynthesis; siroheme from sirohydrochlorin: step 1/1. It functions in the pathway porphyrin-containing compound metabolism; siroheme biosynthesis; sirohydrochlorin from precorrin-2: step 1/1. Its function is as follows. Multifunctional enzyme that catalyzes the SAM-dependent methylations of uroporphyrinogen III at position C-2 and C-7 to form precorrin-2 via precorrin-1. Then it catalyzes the NAD-dependent ring dehydrogenation of precorrin-2 to yield sirohydrochlorin. Finally, it catalyzes the ferrochelation of sirohydrochlorin to yield siroheme. The polypeptide is Siroheme synthase (Escherichia coli O17:K52:H18 (strain UMN026 / ExPEC)).